The sequence spans 276 residues: Diaminopimelate epimerase (276 aa).

Substrate is bound by residues Asn-11, Gln-44, and Asn-64. Cys-73 (proton donor) is an active-site residue. Substrate is bound by residues 74–75, Asn-157, Asn-190, and 208–209; these read GN and ER. Residue Cys-217 is the Proton acceptor of the active site. 218–219 is a substrate binding site; the sequence is GS.

Belongs to the diaminopimelate epimerase family. In terms of assembly, homodimer.

The protein resides in the cytoplasm. The enzyme catalyses (2S,6S)-2,6-diaminopimelate = meso-2,6-diaminopimelate. The protein operates within amino-acid biosynthesis; L-lysine biosynthesis via DAP pathway; DL-2,6-diaminopimelate from LL-2,6-diaminopimelate: step 1/1. Functionally, catalyzes the stereoinversion of LL-2,6-diaminopimelate (L,L-DAP) to meso-diaminopimelate (meso-DAP), a precursor of L-lysine and an essential component of the bacterial peptidoglycan. The sequence is that of Diaminopimelate epimerase from Blochmanniella floridana.